A 167-amino-acid polypeptide reads, in one-letter code: Novel acetylcholine receptor chaperone (167 aa).

Residues 1 to 5 (MASPR) lie on the Cytoplasmic side of the membrane. Residues 6–26 (TVTIVALSVALGLFFVFMGTI) traverse the membrane as a helical segment. Topologically, residues 27–61 (KLTPRLSKDAYSEMKRAYKSYVRALPLLKKMGINS) are lumenal. The interaction with NGFR stretch occupies residues 43–54 (AYKSYVRALPLL). A helical transmembrane segment spans residues 62-82 (ILLRKSIGALEVACGIVMTLV). Topologically, residues 83 to 88 (PGRPKD) are cytoplasmic. A helical membrane pass occupies residues 89–109 (VANFFLLLLVLAVLFFHQLVG). Residues 110–114 (DPLKR) lie on the Lumenal side of the membrane. The helical transmembrane segment at 115–132 (YAHALVFGILLTCRLLIA) threads the bilayer. Residues 133–167 (RKPEDRSSEKKPLPGNAEEQPSLYEKAPQGKVKVS) are Cytoplasmic-facing. The interval 136-167 (EDRSSEKKPLPGNAEEQPSLYEKAPQGKVKVS) is disordered.

It belongs to the DoxX family. In terms of assembly, may interact with NGFR. Interacts with RPN1, RPN2 and CANX.

Its subcellular location is the peroxisome membrane. The protein localises to the cytoplasmic vesicle. It is found in the endoplasmic reticulum membrane. Functionally, molecular chaperone which mediates the proper assembly and functional expression of the nicotinic acetylcholine receptors (nAChRs) throughout the brain. Essential for the proper folding, assembly, function and surface trafficking of alpha-7 (CHRNA7), alpha-4-beta-2, alpha-3-beta-2 and alpha-3-beta-4 receptors. Stably associates with ribophorin-1 (RPN1) and ribophorin-2 (RPN2) (components of the oligosaccharyl transferase (OST) complex) and with calnexin (CANX), both of which are critical for NACHO-mediated effects on CHRNA7 assembly and function. Facilitates the proper folding and assembly of alpha-6-beta-2 and alpha-6-beta-2-beta-3 receptors and acts at early stages of the nAChRs subunit assembly. Promotes the expression of the alpha-4(2):beta-2(3) stoichiometric form over the alpha-4(3):beta-2(2) form. This Macaca fascicularis (Crab-eating macaque) protein is Novel acetylcholine receptor chaperone (TMEM35A).